The sequence spans 157 residues: Endoribonuclease YbeY (157 aa).

Residues H112, H116, and H122 each contribute to the Zn(2+) site.

It belongs to the endoribonuclease YbeY family. The cofactor is Zn(2+).

The protein localises to the cytoplasm. Functionally, single strand-specific metallo-endoribonuclease involved in late-stage 70S ribosome quality control and in maturation of the 3' terminus of the 16S rRNA. The sequence is that of Endoribonuclease YbeY from Marinobacter nauticus (strain ATCC 700491 / DSM 11845 / VT8) (Marinobacter aquaeolei).